The sequence spans 149 residues: Transcriptional repressor NrdR (149 aa).

A zinc finger spans residues Cys3 to Cys34. An ATP-cone domain is found at Pro49 to Glu139.

It belongs to the NrdR family. Zn(2+) serves as cofactor.

Its function is as follows. Negatively regulates transcription of bacterial ribonucleotide reductase nrd genes and operons by binding to NrdR-boxes. This is Transcriptional repressor NrdR from Haemophilus ducreyi (strain 35000HP / ATCC 700724).